The chain runs to 421 residues: Zinc finger protein Pegasus (421 aa).

The disordered stretch occupies residues 35-55 (GDKEAETLQGAGTEGDQNGLD). 3 C2H2-type zinc fingers span residues 82–104 (LKCR…IRIH), 110–132 (HRCH…MRSH), and 138–161 (YKCE…RRKH). Residues 229-238 (SMTKSSQTSG) are compositionally biased toward polar residues. 2 disordered regions span residues 229–249 (SMTK…LMVD) and 292–358 (QPAT…PTLP). Over residues 292 to 313 (QPATPAVVSSVSASIAQSSSPT) the composition is skewed to low complexity. A compositionally biased stretch (polar residues) spans 339–351 (HTSTPSISNSQPS). 2 consecutive C2H2-type zinc fingers follow at residues 366-388 (HHCQ…MGCH) and 394-418 (FQCN…RGQH).

Belongs to the Ikaros C2H2-type zinc-finger protein family. In terms of assembly, probably self-associates.

The protein resides in the nucleus. In terms of biological role, transcriptional repressor that binds the core 5'GNNTGTNG-3' DNA consensus sequence. In Gallus gallus (Chicken), this protein is Zinc finger protein Pegasus (IKZF5).